The chain runs to 328 residues: Malate dehydrogenase (328 aa).

12-18 (GAAGQIG) is an NAD(+) binding site. 2 residues coordinate substrate: Arg95 and Arg101. NAD(+)-binding positions include Asn108, Gln115, and 132 to 134 (VGN). Asn134 and Arg165 together coordinate substrate. His190 (proton acceptor) is an active-site residue.

It belongs to the LDH/MDH superfamily. MDH type 2 family.

The catalysed reaction is (S)-malate + NAD(+) = oxaloacetate + NADH + H(+). In terms of biological role, catalyzes the reversible oxidation of malate to oxaloacetate. This Polaromonas sp. (strain JS666 / ATCC BAA-500) protein is Malate dehydrogenase.